Here is a 523-residue protein sequence, read N- to C-terminus: Acetyl-CoA hydrolase (523 aa).

277-281 provides a ligand contact to CoA; sequence GIGNI. The active-site 5-glutamyl coenzyme A thioester intermediate is the Glu-302. Residues Asn-392 and Gly-396 each coordinate CoA.

The protein belongs to the acetyl-CoA hydrolase/transferase family.

The protein resides in the cytoplasm. It catalyses the reaction acetyl-CoA + H2O = acetate + CoA + H(+). Its function is as follows. Presumably involved in regulating the intracellular acetyl-CoA pool for fatty acid and cholesterol synthesis and fatty acid oxidation. The protein is Acetyl-CoA hydrolase (ACH1) of Eremothecium gossypii (strain ATCC 10895 / CBS 109.51 / FGSC 9923 / NRRL Y-1056) (Yeast).